The sequence spans 456 residues: Protein odr-4 homolog (456 aa).

The segment covering 374–401 (IESSKNNNNNNNNNNNNNNNNNNNNSKL) has biased composition (low complexity). A disordered region spans residues 374-403 (IESSKNNNNNNNNNNNNNNNNNNNNSKLSN). Residues 436–456 (YLIIIISVLVLMVAFYFKFFV) traverse the membrane as a helical segment.

The protein belongs to the ODR-4 family.

It is found in the membrane. Functionally, may play a role in the trafficking of a subset of G-protein coupled receptors. This is Protein odr-4 homolog from Dictyostelium discoideum (Social amoeba).